The primary structure comprises 368 residues: Metacaspase-6 (368 aa).

Active-site residues include H86 and C139. At C139 the chain carries S-nitrosocysteine. Residues 153 to 174 (GESTKKKKDSGDSSTINKETEA) form a disordered region.

This sequence belongs to the peptidase C14B family. Proteolytically processed; by an autocatalytic mechanism. As to expression, expressed in roots and flower buds.

The chain is Metacaspase-6 (AMC6) from Arabidopsis thaliana (Mouse-ear cress).